Here is a 333-residue protein sequence, read N- to C-terminus: Diacylglycerol acyltransferase/mycolyltransferase Ag85C (333 aa).

The N-terminal stretch at 1 to 44 is a signal peptide; that stretch reads MKFLQQMRKLFGLAAKFPARLTIAVIGTALLAGLVGVVGDTAIA. 86–87 lines the substrate pocket; sequence LR. A fibronectin-binding region spans residues 102-112; that stretch reads FEEYYHSGLSV. Serine 170 and asparagine 198 together coordinate substrate. The Nucleophile role is filled by serine 170. Glutamate 274 is an active-site residue. Substrate is bound by residues 276-279 and 306-308; these read LTLS and HSW. The active site involves histidine 306.

Belongs to the mycobacterial A85 antigen family. In terms of assembly, homodimer.

It is found in the secreted. The enzyme catalyses an acyl-CoA + a 1,2-diacyl-sn-glycerol = a triacyl-sn-glycerol + CoA. The catalysed reaction is 2 alpha,alpha'-trehalose 6-mycolate = alpha,alpha'-trehalose 6,6'-bismycolate + alpha,alpha-trehalose. In terms of biological role, the antigen 85 proteins (FbpA, FbpB, FbpC) are responsible for the high affinity of mycobacteria to fibronectin, a large adhesive glycoprotein, which facilitates the attachment of M.tuberculosis to murine alveolar macrophages (AMs). They also help to maintain the integrity of the cell wall by catalyzing the transfer of mycolic acids to cell wall arabinogalactan and through the synthesis of alpha,alpha-trehalose dimycolate (TDM, cord factor). They catalyze the transfer of a mycoloyl residue from one molecule of alpha,alpha-trehalose monomycolate (TMM) to another TMM, leading to the formation of TDM. The sequence is that of Diacylglycerol acyltransferase/mycolyltransferase Ag85C (fbpC) from Mycobacterium leprae (strain TN).